The primary structure comprises 699 residues: Condensin complex subunit 2 (699 aa).

Disordered stretches follow at residues Met1 to Ala35 and Glu176 to Lys203.

The protein belongs to the CND2 (condensin subunit 2) family. In terms of assembly, component of the condensin complex, which contains the XCAP-E/SMC2 and XCAP-C/SMC4 heterodimer, and three non SMC subunits that probably regulate the complex: XCAP-H/NCAPH, XCAP-D2/NCAPD2 and XCAP-G/NCAPG. In terms of processing, phosphorylated by CDK1. Its phosphorylation, as well as that of XCAP-D2 and XCAP-G subunits, activates the condensin complex and is required for chromosome condensation.

The protein resides in the nucleus. It localises to the cytoplasm. Its subcellular location is the chromosome. Its function is as follows. Regulatory subunit of the condensin complex, a complex required for conversion of interphase chromatin into mitotic-like condense chromosomes. The condensin complex probably introduces positive supercoils into relaxed DNA in the presence of type I topoisomerases and converts nicked DNA into positive knotted forms in the presence of type II topoisomerase. The sequence is that of Condensin complex subunit 2 (ncaph) from Xenopus laevis (African clawed frog).